Here is a 402-residue protein sequence, read N- to C-terminus: 4-hydroxy-3-methylbut-2-enyl diphosphate reductase (402 aa).

C66 provides a ligand contact to [4Fe-4S] cluster. H96 lines the (2E)-4-hydroxy-3-methylbut-2-enyl diphosphate pocket. H96 serves as a coordination point for dimethylallyl diphosphate. H96 lines the isopentenyl diphosphate pocket. C157 contacts [4Fe-4S] cluster. H185 serves as a coordination point for (2E)-4-hydroxy-3-methylbut-2-enyl diphosphate. H185 provides a ligand contact to dimethylallyl diphosphate. H185 serves as a coordination point for isopentenyl diphosphate. The Proton donor role is filled by E187. T250 lines the (2E)-4-hydroxy-3-methylbut-2-enyl diphosphate pocket. Position 288 (C288) interacts with [4Fe-4S] cluster. S317, S318, N319, and S379 together coordinate (2E)-4-hydroxy-3-methylbut-2-enyl diphosphate. Positions 317, 318, 319, and 379 each coordinate dimethylallyl diphosphate. 4 residues coordinate isopentenyl diphosphate: S317, S318, N319, and S379.

This sequence belongs to the IspH family. [4Fe-4S] cluster is required as a cofactor.

It carries out the reaction isopentenyl diphosphate + 2 oxidized [2Fe-2S]-[ferredoxin] + H2O = (2E)-4-hydroxy-3-methylbut-2-enyl diphosphate + 2 reduced [2Fe-2S]-[ferredoxin] + 2 H(+). It catalyses the reaction dimethylallyl diphosphate + 2 oxidized [2Fe-2S]-[ferredoxin] + H2O = (2E)-4-hydroxy-3-methylbut-2-enyl diphosphate + 2 reduced [2Fe-2S]-[ferredoxin] + 2 H(+). Its pathway is isoprenoid biosynthesis; dimethylallyl diphosphate biosynthesis; dimethylallyl diphosphate from (2E)-4-hydroxy-3-methylbutenyl diphosphate: step 1/1. It functions in the pathway isoprenoid biosynthesis; isopentenyl diphosphate biosynthesis via DXP pathway; isopentenyl diphosphate from 1-deoxy-D-xylulose 5-phosphate: step 6/6. Functionally, catalyzes the conversion of 1-hydroxy-2-methyl-2-(E)-butenyl 4-diphosphate (HMBPP) into a mixture of isopentenyl diphosphate (IPP) and dimethylallyl diphosphate (DMAPP). Acts in the terminal step of the DOXP/MEP pathway for isoprenoid precursor biosynthesis. In Trichormus variabilis (strain ATCC 29413 / PCC 7937) (Anabaena variabilis), this protein is 4-hydroxy-3-methylbut-2-enyl diphosphate reductase.